The following is a 410-amino-acid chain: Arginine deiminase (410 aa).

The active-site Amidino-cysteine intermediate is the C400.

Belongs to the arginine deiminase family.

The protein resides in the cytoplasm. The enzyme catalyses L-arginine + H2O = L-citrulline + NH4(+). It participates in amino-acid degradation; L-arginine degradation via ADI pathway; carbamoyl phosphate from L-arginine: step 1/2. The protein is Arginine deiminase of Streptococcus agalactiae serotype Ia (strain ATCC 27591 / A909 / CDC SS700).